A 471-amino-acid polypeptide reads, in one-letter code: Putative multidrug resistance protein MdtD (471 aa).

13 helical membrane passes run 12–32, 49–69, 77–97, 106–126, 138–158, 165–185, 195–215, 220–240, 263–283, 286–306, 342–362, 393–413, and 431–451; these read LWIVAFGFFMQSLDTTIVNTA, MIIVSYVLTVAVMLPASGWLA, IFFTAIVLFTAGSLFCAQAST, VLQGIGGAMMVPVGRLTVMKI, FVTLPGQVGPLLGPALGGVLV, WIFLINIPVGIVGAIATLCLM, FDLSGFLLLAAGMATLTLALD, LGISSRWLAGLVAVGLAALLL, FSLGLGGSFAGRIGSGMLPFM, VFLQIGLGFSPFHAGLMMIPM, LLFMFSALAGWYYALPLVLFL, LLSMVMQLSMSIGVTIAGLLL, and VFLYTYLSMAAIIALPALIFS.

It belongs to the major facilitator superfamily. TCR/Tet family.

The protein resides in the cell inner membrane. The polypeptide is Putative multidrug resistance protein MdtD (Klebsiella pneumoniae (strain 342)).